The following is a 408-amino-acid chain: Zinc-regulated transporter 1 (408 aa).

3 consecutive transmembrane segments (helical) span residues Ile64–Leu84, Leu101–Ala121, and Trp141–Asn161. Residues Thr234 and Thr237 each carry the phosphothreonine modification. Transmembrane regions (helical) follow at residues Phe254–Val274, Phe279–Ser299, Trp315–Val335, Gly351–Ala371, and Leu387–Trp407.

It belongs to the ZIP transporter (TC 2.A.5) family.

The protein localises to the endoplasmic reticulum membrane. Functionally, high-affinity zinc transport protein. Regulates intracellular zinc levels. This chain is Zinc-regulated transporter 1 (zrt1), found in Schizosaccharomyces pombe (strain 972 / ATCC 24843) (Fission yeast).